Here is a 415-residue protein sequence, read N- to C-terminus: 4-hydroxy-3-methylbut-2-enyl diphosphate reductase (415 aa).

Residue Cys66 coordinates [4Fe-4S] cluster. His96 is a (2E)-4-hydroxy-3-methylbut-2-enyl diphosphate binding site. His96 lines the dimethylallyl diphosphate pocket. His96 provides a ligand contact to isopentenyl diphosphate. Cys158 lines the [4Fe-4S] cluster pocket. His186 contacts (2E)-4-hydroxy-3-methylbut-2-enyl diphosphate. A dimethylallyl diphosphate-binding site is contributed by His186. His186 serves as a coordination point for isopentenyl diphosphate. The active-site Proton donor is Glu188. Thr259 provides a ligand contact to (2E)-4-hydroxy-3-methylbut-2-enyl diphosphate. A [4Fe-4S] cluster-binding site is contributed by Cys297. 4 residues coordinate (2E)-4-hydroxy-3-methylbut-2-enyl diphosphate: Ser326, Ser327, Asn328, and Ser388. 4 residues coordinate dimethylallyl diphosphate: Ser326, Ser327, Asn328, and Ser388. Residues Ser326, Ser327, Asn328, and Ser388 each coordinate isopentenyl diphosphate.

The protein belongs to the IspH family. Requires [4Fe-4S] cluster as cofactor.

It catalyses the reaction isopentenyl diphosphate + 2 oxidized [2Fe-2S]-[ferredoxin] + H2O = (2E)-4-hydroxy-3-methylbut-2-enyl diphosphate + 2 reduced [2Fe-2S]-[ferredoxin] + 2 H(+). The catalysed reaction is dimethylallyl diphosphate + 2 oxidized [2Fe-2S]-[ferredoxin] + H2O = (2E)-4-hydroxy-3-methylbut-2-enyl diphosphate + 2 reduced [2Fe-2S]-[ferredoxin] + 2 H(+). Its pathway is isoprenoid biosynthesis; dimethylallyl diphosphate biosynthesis; dimethylallyl diphosphate from (2E)-4-hydroxy-3-methylbutenyl diphosphate: step 1/1. It participates in isoprenoid biosynthesis; isopentenyl diphosphate biosynthesis via DXP pathway; isopentenyl diphosphate from 1-deoxy-D-xylulose 5-phosphate: step 6/6. Its function is as follows. Catalyzes the conversion of 1-hydroxy-2-methyl-2-(E)-butenyl 4-diphosphate (HMBPP) into a mixture of isopentenyl diphosphate (IPP) and dimethylallyl diphosphate (DMAPP). Acts in the terminal step of the DOXP/MEP pathway for isoprenoid precursor biosynthesis. This Acaryochloris marina (strain MBIC 11017) protein is 4-hydroxy-3-methylbut-2-enyl diphosphate reductase.